We begin with the raw amino-acid sequence, 730 residues long: Multifunctional procollagen lysine hydroxylase and glycosyltransferase (730 aa).

The N-terminal stretch at 1-16 (MRVLPFLLPLIPVLLA) is a signal peptide. The segment at 20–280 (TDLPELVVVT…CGLEVKESEE (261 aa)) is required for glycosyltransferase activity. Residues 30–32 (VAT) and 98–100 (DAY) contribute to the UDP site. 3 residues coordinate Mn(2+): D98, D101, and H242. 245 to 248 (GPSK) is a UDP binding site. A disulfide bridge links C268 with C271. Residues 281–507 (VPLIALNLFI…YYGFLIVSDE (227 aa)) are accessory region. The cysteines at positions 554 and 690 are disulfide-linked. 2-oxoglutarate contacts are provided by R590 and Y648. In terms of domain architecture, Fe2OG dioxygenase spans 639-730 (ESNMMFVVRY…RYIMVSFINP (92 aa)). H659 and D661 together coordinate Fe cation. The segment at 664–707 (TFSIDIALNKKGRDYEGGGVRYIRYNCTVPADEVGYAMMFPGRL) is important for dimerization. N-linked (GlcNAc...) asparagine glycosylation is present at N689. Residue H711 coordinates Fe cation. Residue R721 participates in 2-oxoglutarate binding.

Homodimer. Fe(2+) serves as cofactor. Requires L-ascorbate as cofactor. Mn(2+) is required as a cofactor.

It localises to the rough endoplasmic reticulum. The protein resides in the endoplasmic reticulum lumen. It is found in the endoplasmic reticulum membrane. The protein localises to the secreted. Its subcellular location is the extracellular space. It carries out the reaction L-lysyl-[collagen] + 2-oxoglutarate + O2 = (5R)-5-hydroxy-L-lysyl-[collagen] + succinate + CO2. It catalyses the reaction (5R)-5-hydroxy-L-lysyl-[collagen] + UDP-alpha-D-galactose = (5R)-5-O-(beta-D-galactosyl)-5-hydroxy-L-lysyl-[collagen] + UDP + H(+). The catalysed reaction is (5R)-5-O-(beta-D-galactosyl)-5-hydroxy-L-lysyl-[collagen] + UDP-alpha-D-glucose = (5R)-5-O-[alpha-D-glucosyl-(1-&gt;2)-beta-D-galactosyl]-5-hydroxy-L-lysyl-[collagen] + UDP + H(+). Multifunctional enzyme that catalyzes a series of post-translational modifications on Lys residues in procollagen. Catalyzes the formation of hydroxylysine residues in -Xaa-Lys-Gly- sequences in type IV collagens. Transfers galactose onto hydroxylysine groups, giving rise to galactosyl 5-hydroxylysine. Catalyzes the subsequent transfer of glucose moieties, giving rise to 1,2-glucosylgalactosyl-5-hydroxylysine residues. Essential for normal biosynthesis and secretion of type IV collagens. Essential for normal stability of the basement membrane. The chain is Multifunctional procollagen lysine hydroxylase and glycosyltransferase (let-268) from Caenorhabditis elegans.